Reading from the N-terminus, the 425-residue chain is Metacaspase-1 (425 aa).

The interval 1-110 (MSYNSNPYNG…PQLPNTQTQS (110 aa)) is disordered. The span at 13–28 (YPPYNTYTRPNYSPNN) shows a compositional bias: low complexity. Composition is skewed to polar residues over residues 29 to 38 (GSQSNNTVHQ) and 88 to 110 (TGAN…QTQS). Active-site residues include histidine 214 and cysteine 270.

This sequence belongs to the peptidase C14B family.

The protein resides in the cytoplasm. It localises to the nucleus. In terms of biological role, involved in cell death (apoptosis). This is Metacaspase-1 (pca1) from Schizosaccharomyces pombe (strain 972 / ATCC 24843) (Fission yeast).